Consider the following 150-residue polypeptide: uncharacterized protein (150 aa).

The segment covering 1–19 (MNDDSSSSSSGDSSDGSSG) has biased composition (low complexity). Disordered stretches follow at residues 1–21 (MNDD…SGTT) and 85–131 (EPEA…AYPE). The span at 106-115 (RPPPTEPPTV) shows a compositional bias: pro residues.

This is an uncharacterized protein from Schizosaccharomyces pombe (strain 972 / ATCC 24843) (Fission yeast).